A 156-amino-acid chain; its full sequence is Lipoprotein signal peptidase (156 aa).

The next 2 membrane-spanning stretches (helical) occupy residues 52–72 and 85–105; these read ILEG…IGIV and FATA…DRIF. Catalysis depends on residues D111 and D129. A helical transmembrane segment spans residues 121–141; that stretch reads NFPIFNVADSALCVGVGILFL.

It belongs to the peptidase A8 family.

The protein resides in the cell membrane. It catalyses the reaction Release of signal peptides from bacterial membrane prolipoproteins. Hydrolyzes -Xaa-Yaa-Zaa-|-(S,diacylglyceryl)Cys-, in which Xaa is hydrophobic (preferably Leu), and Yaa (Ala or Ser) and Zaa (Gly or Ala) have small, neutral side chains.. Its pathway is protein modification; lipoprotein biosynthesis (signal peptide cleavage). Functionally, this protein specifically catalyzes the removal of signal peptides from prolipoproteins. This Halalkalibacterium halodurans (strain ATCC BAA-125 / DSM 18197 / FERM 7344 / JCM 9153 / C-125) (Bacillus halodurans) protein is Lipoprotein signal peptidase.